Consider the following 162-residue polypeptide: MMTALSDPRFTRAVSDDGSLATPFMKCLARLVRAHDSYGLWKDKCDAELLANFTVTEEQRRAIPVIGDPEPDVLLRLDLFYAAVGVVIEERSGLLISRTLEISDEGIGRVLFTTRRLVVLSKTLRDVHRFGFNTLGKCAKTGTKLVKDAIKSIETYPDVARA.

The protein belongs to the UPF0460 family.

This chain is UPF0460 protein y4xD, found in Sinorhizobium fredii (strain NBRC 101917 / NGR234).